A 568-amino-acid chain; its full sequence is Calcium-dependent protein kinase 5 (568 aa).

In terms of domain architecture, Protein kinase spans 125-379; it reads EIDRYKLGKG…VEQVLKHRWF (255 aa). Residues 131-139 and Lys-154 each bind ATP; that span reads LGKGSYGNV. Catalysis depends on Asp-245, which acts as the Proton acceptor. The short motif at 400–408 is the J domain autoinhibitory motif element; it reads KFKEFHKLC. The segment at 400–435 is j domain; it reads KFKEFHKLCKIKKLAVTCIAYQLNEKDIGKLKKTFE. A J domain EF-hand interaction motif motif is present at residues 409 to 418; it reads KIKKLAVTCI. EF-hand domains follow at residues 425–460, 462–495, 496–531, and 534–568; these read KDIG…NDNE, DREL…HSIF, QQDV…SAVQ, and FSKE…GVKE. The Ca(2+) site is built by Asp-438, Asn-440, Asp-442, Glu-449, Asp-473, Asp-475, Asn-477, Glu-484, Asp-509, Asp-511, Asp-513, Glu-520, Asp-547, Asn-549, Asp-551, and Glu-558.

It belongs to the protein kinase superfamily. Ser/Thr protein kinase family. CDPK subfamily. Mg(2+) is required as a cofactor. May be palmitoylated. Post-translationally, autophosphorylated in vitro.

Its subcellular location is the cytoplasm. It localises to the cytoplasmic vesicle. The protein resides in the secretory vesicle. The protein localises to the microneme membrane. It is found in the cell membrane. It carries out the reaction L-seryl-[protein] + ATP = O-phospho-L-seryl-[protein] + ADP + H(+). The catalysed reaction is L-threonyl-[protein] + ATP = O-phospho-L-threonyl-[protein] + ADP + H(+). With respect to regulation, activated by calcium. Upon calcium binding to the EF-hand domains, the C-terminus of the junction domain (J domain) undergoes a conformational change which results in the dissociation of the pseudo-substrate inhibitory motif from the catalytic domain. This, in turn, may facilitate the autophosphorylation of the activation loop at Thr-285, which leads to the kinase activation. Its function is as follows. Calcium-dependent protein kinase which acts as a sensor and effector of intracellular Ca(2+) levels probably in part downstream of cGMP-activated PKG kinase. Plays a central role in host erythrocytes and hepatocytes infection cycles. During the liver stage, involved in sporozoite motility and thus in sporozoite invasion of host hepatocytes, probably together with CDPK1 and CDPK4. Involved in merosome egress from host hepatocytes, probably together with CDPK4. Required for the release of hepatic merozoites from merosomes in the host blood stream. During the asexual blood stage, required for merozoite egress from host erythrocytes by triggering microneme secretion. Phosphorylates transporter NPT1 at late schizont stage. This Plasmodium falciparum (isolate 3D7) protein is Calcium-dependent protein kinase 5.